We begin with the raw amino-acid sequence, 208 residues long: Small ribosomal subunit protein uS4 (208 aa).

An S4 RNA-binding domain is found at 95-157; sequence RRIDNIVYRA…DSLKKLIRSN (63 aa).

This sequence belongs to the universal ribosomal protein uS4 family. Part of the 30S ribosomal subunit. Contacts protein S5. The interaction surface between S4 and S5 is involved in control of translational fidelity.

In terms of biological role, one of the primary rRNA binding proteins, it binds directly to 16S rRNA where it nucleates assembly of the body of the 30S subunit. Functionally, with S5 and S12 plays an important role in translational accuracy. The protein is Small ribosomal subunit protein uS4 of Borrelia garinii subsp. bavariensis (strain ATCC BAA-2496 / DSM 23469 / PBi) (Borreliella bavariensis).